We begin with the raw amino-acid sequence, 156 residues long: 2-C-methyl-D-erythritol 2,4-cyclodiphosphate synthase (156 aa).

2 residues coordinate a divalent metal cation: aspartate 9 and histidine 11. 4-CDP-2-C-methyl-D-erythritol 2-phosphate contacts are provided by residues 9–11 and 35–36; these read DAH and HS. Histidine 43 provides a ligand contact to a divalent metal cation. 57–59 is a 4-CDP-2-C-methyl-D-erythritol 2-phosphate binding site; the sequence is DIG.

This sequence belongs to the IspF family. As to quaternary structure, homotrimer. It depends on a divalent metal cation as a cofactor.

The catalysed reaction is 4-CDP-2-C-methyl-D-erythritol 2-phosphate = 2-C-methyl-D-erythritol 2,4-cyclic diphosphate + CMP. Its pathway is isoprenoid biosynthesis; isopentenyl diphosphate biosynthesis via DXP pathway; isopentenyl diphosphate from 1-deoxy-D-xylulose 5-phosphate: step 4/6. In terms of biological role, involved in the biosynthesis of isopentenyl diphosphate (IPP) and dimethylallyl diphosphate (DMAPP), two major building blocks of isoprenoid compounds. Catalyzes the conversion of 4-diphosphocytidyl-2-C-methyl-D-erythritol 2-phosphate (CDP-ME2P) to 2-C-methyl-D-erythritol 2,4-cyclodiphosphate (ME-CPP) with a corresponding release of cytidine 5-monophosphate (CMP). This chain is 2-C-methyl-D-erythritol 2,4-cyclodiphosphate synthase, found in Hydrogenobaculum sp. (strain Y04AAS1).